We begin with the raw amino-acid sequence, 204 residues long: Urease accessory protein UreG (204 aa).

Gly-15 to Thr-22 contributes to the GTP binding site.

The protein belongs to the SIMIBI class G3E GTPase family. UreG subfamily. Homodimer. UreD, UreF and UreG form a complex that acts as a GTP-hydrolysis-dependent molecular chaperone, activating the urease apoprotein by helping to assemble the nickel containing metallocenter of UreC. The UreE protein probably delivers the nickel.

The protein localises to the cytoplasm. Functionally, facilitates the functional incorporation of the urease nickel metallocenter. This process requires GTP hydrolysis, probably effectuated by UreG. In Methylobacterium nodulans (strain LMG 21967 / CNCM I-2342 / ORS 2060), this protein is Urease accessory protein UreG.